The sequence spans 1249 residues: Voltage-dependent calcium channel unc-36 (1249 aa).

The N-terminal stretch at 1 to 19 is a signal peptide; the sequence is MRVVHLLVVLATYVSTTSS. Topologically, residues 20-1228 are extracellular; that stretch reads FNKESIKECA…SENERRPCST (1209 aa). Residues Asn100, Asn140, Asn146, Asn302, Asn520, Asn558, Asn757, Asn838, Asn903, Asn923, and Asn1130 are each glycosylated (N-linked (GlcNAc...) asparagine). The VWFA domain occupies 250 to 479; sequence NVLIMLDMSG…EKIHHYIRRM (230 aa). The chain crosses the membrane as a helical span at residues 1229 to 1248; it reads SPTIVSIFQILFGVFLHFCI. Position 1249 (Phe1249) is a topological domain, cytoplasmic.

Decendants of the cells AB and AB.p (that give rise to nearly all non-pharyngeal neurons), decendants of P1 (that give rise to body muscle) and cell lineages that give rise to the adult and juvenile motor neurons. Expressed in body wall, vulval muscle and pharyngeal muscle.

The protein localises to the membrane. Its function is as follows. May act as an auxiliary subunit of the unc-2 voltage-gated calcium channel which appears to trigger calcium-activated signaling pathways that control the serotonin response. Inhibiting serotonin sensitivity of the vulval muscles results in egg laying defects. May act in both neurons and muscle cells to enhance motor activity as it is required for coordinated movement. Has a role in neural depolarization-induced calcium influx and pharyngeal pumping. Involved in restricting the expression of the putative olfactory receptor str-2 to only one of the two AWC neurons. In Caenorhabditis elegans, this protein is Voltage-dependent calcium channel unc-36 (unc-36).